The sequence spans 191 residues: RNA pyrophosphohydrolase (191 aa).

A Nudix hydrolase domain is found at 6–149 (GYRLNVGIIL…KREVYRQALS (144 aa)). Residues 38–59 (GGIKVDEDPDAAMFRELYEEVG) carry the Nudix box motif. A disordered region spans residues 162–191 (GAQAVSDAGGTATRQIPVATEPSGPSSSQR).

This sequence belongs to the Nudix hydrolase family. RppH subfamily. A divalent metal cation serves as cofactor.

In terms of biological role, accelerates the degradation of transcripts by removing pyrophosphate from the 5'-end of triphosphorylated RNA, leading to a more labile monophosphorylated state that can stimulate subsequent ribonuclease cleavage. The protein is RNA pyrophosphohydrolase of Methylococcus capsulatus (strain ATCC 33009 / NCIMB 11132 / Bath).